Here is a 601-residue protein sequence, read N- to C-terminus: MDLIRNFSIIAHIDHGKSTLADRIIQHCGGLSDREMEAQVLDSMDIERERGITIKAQTAALTYKSRDGKTYNINLIDTPGHVDFSYEVSRSLSACEGALLVVDASQGVEAQTVANCYMALELGVEVVPVLNKIDLPQADPERAKKEIEDVIGIDASHAVTCSAKTGLGVQDVIEEMIARVPPPTGNAADPLQALIIDSWFDNYVGVVMLVRVVNGSLKPKDKITLMANGSSHLVEHVGVFSPKSIDRPELSAGQVGFVIAGIKELKAAKVGDTVTHSPGQQGRVPATEPLPGFKEVKPQVFAGLYPVESSEYDQLRESLEKLQLNDASLLYEPEVSQALGFGFRCGFLGLLHMEIVQERLERQYGMNLITTAPTVVYQVEQSDGSILSVDNPSKMPEASKINTILEPIVTVNLYMPQEYVGAIITLCVGKRGIQMDMNYLGRQVKLTYELPMAEIVLDFFDKMKSISRGYASMDYEFKEYRPADVVKVDILINGERVDALSVIVHRSNSQHRGREVVAKMRGIIPRQMFDVAIQAAIGSNIVARENVKALRKNVLAKCYGGDISRKRKLLEKQKEGKKRMKQVGNVEIPQEAFLAILQVDD.

The tr-type G domain occupies 2–184; sequence DLIRNFSIIA…EMIARVPPPT (183 aa). GTP contacts are provided by residues 14-19 and 131-134; these read DHGKST and NKID.

This sequence belongs to the TRAFAC class translation factor GTPase superfamily. Classic translation factor GTPase family. LepA subfamily.

It localises to the cell inner membrane. The catalysed reaction is GTP + H2O = GDP + phosphate + H(+). Its function is as follows. Required for accurate and efficient protein synthesis under certain stress conditions. May act as a fidelity factor of the translation reaction, by catalyzing a one-codon backward translocation of tRNAs on improperly translocated ribosomes. Back-translocation proceeds from a post-translocation (POST) complex to a pre-translocation (PRE) complex, thus giving elongation factor G a second chance to translocate the tRNAs correctly. Binds to ribosomes in a GTP-dependent manner. In Polynucleobacter asymbioticus (strain DSM 18221 / CIP 109841 / QLW-P1DMWA-1) (Polynucleobacter necessarius subsp. asymbioticus), this protein is Elongation factor 4.